A 602-amino-acid chain; its full sequence is MYSAHTPWYDGQVMDYPRRTIACGELRRCHVGTVVVLNGWVHRKRSHGTVSFFNMRDRSGIVQVIVSQEENASLWSTVNRIRLECCLAVEGVVRERPPSMINRALHTGEVEVHARTLYVLSENAVLPFRVDDVVHAHEDIRLKYRYLDLRSQRMQERIALRSRVALAIRQFLSMKGFIEIETPTFICSTPEGARDFVVPSRVCPGRFYALPQSPQLYKQLLMVAGFDRYFQLARCYRDEDARGDRQPEFTQIDLEMSFVSRDDVMRVNEDMLRYVFRTSIGVELPTFFPRLTYAQALDQYGTDKPDMRFKPVLQNADFMGMLGTFTPFEEVVAQGGSIRALVLPGKARCYSRRQIEALESIARAHEAHHLFWLKATGGGLEGGIARFFAGVESEVRRRLSAQDEDLLLFVADCRHRVCCVALGAVRSALIRDESFPEKELFSFVWIVDFPLFEWNPAENKWDPAHHMFSAPQEQYLETLEQDPGSVKGDLYDLVLNGYELASGSIRIHDTQLQKRIFKIVGLDPEEAGEKFGFLTEAFKYGAPPHGGIAHGLDRLVMLMTGSESIRDVIAFPKNTLAASPLDNCPSVLDKRQLDELHLTVHV.

An L-aspartate-binding site is contributed by E191. Residues 215–218 (QLYK) form an aspartate region. R237 lines the L-aspartate pocket. ATP-binding positions include 237–239 (RDE) and Q246. H465 lines the L-aspartate pocket. E499 serves as a coordination point for ATP. R506 contacts L-aspartate. 551-554 (GLDR) provides a ligand contact to ATP.

The protein belongs to the class-II aminoacyl-tRNA synthetase family. Type 1 subfamily. Homodimer.

Its subcellular location is the cytoplasm. It carries out the reaction tRNA(Asx) + L-aspartate + ATP = L-aspartyl-tRNA(Asx) + AMP + diphosphate. Its function is as follows. Aspartyl-tRNA synthetase with relaxed tRNA specificity since it is able to aspartylate not only its cognate tRNA(Asp) but also tRNA(Asn). Reaction proceeds in two steps: L-aspartate is first activated by ATP to form Asp-AMP and then transferred to the acceptor end of tRNA(Asp/Asn). The protein is Aspartate--tRNA(Asp/Asn) ligase of Treponema pallidum (strain Nichols).